Reading from the N-terminus, the 274-residue chain is 4-hydroxy-tetrahydrodipicolinate reductase (274 aa).

NAD(+)-binding positions include G8–M13, E34, G102–T104, and S128–F131. Residue H160 is the Proton donor/acceptor of the active site. H161 contacts (S)-2,3,4,5-tetrahydrodipicolinate. K164 functions as the Proton donor in the catalytic mechanism. G170–T171 serves as a coordination point for (S)-2,3,4,5-tetrahydrodipicolinate.

The protein belongs to the DapB family.

It localises to the cytoplasm. It carries out the reaction (S)-2,3,4,5-tetrahydrodipicolinate + NAD(+) + H2O = (2S,4S)-4-hydroxy-2,3,4,5-tetrahydrodipicolinate + NADH + H(+). It catalyses the reaction (S)-2,3,4,5-tetrahydrodipicolinate + NADP(+) + H2O = (2S,4S)-4-hydroxy-2,3,4,5-tetrahydrodipicolinate + NADPH + H(+). It functions in the pathway amino-acid biosynthesis; L-lysine biosynthesis via DAP pathway; (S)-tetrahydrodipicolinate from L-aspartate: step 4/4. Catalyzes the conversion of 4-hydroxy-tetrahydrodipicolinate (HTPA) to tetrahydrodipicolinate. This is 4-hydroxy-tetrahydrodipicolinate reductase from Methanocaldococcus jannaschii (strain ATCC 43067 / DSM 2661 / JAL-1 / JCM 10045 / NBRC 100440) (Methanococcus jannaschii).